The sequence spans 409 residues: Sprouty-related, EVH1 domain-containing protein 2 (409 aa).

One can recognise a WH1 domain in the interval 5-121 (APPEDDSYIV…RGVRKAIEDL (117 aa)). A disordered region spans residues 121–170 (LTEGSTTSSSTIHNEAELGDDDVFATSTDSSSNSSQKREPPVRTIASPLP). Residues 123–133 (EGSTTSSSTIH) are compositionally biased toward polar residues. The segment covering 146–155 (TSTDSSSNSS) has biased composition (low complexity). Residues 199-253 (PHRHVSFPDDDDEIVRINPRERNWLTGYEDYRQAPIHRKYPDTESIDSYVRFAKS) form the KBD domain. Residues 299 to 407 (RCIYCRDMFN…CGCCGGKHKA (109 aa)) enclose the SPR domain.

The protein localises to the cell membrane. It is found in the cytoplasmic vesicle. It localises to the secretory vesicle membrane. Its subcellular location is the cytoplasm. Its function is as follows. Negatively regulates Ras signaling pathways and downstream activation of MAP kinases. The polypeptide is Sprouty-related, EVH1 domain-containing protein 2 (spred2) (Xenopus tropicalis (Western clawed frog)).